A 155-amino-acid polypeptide reads, in one-letter code: Small ribosomal subunit protein uS7c (155 aa).

This sequence belongs to the universal ribosomal protein uS7 family. As to quaternary structure, part of the 30S ribosomal subunit.

It is found in the plastid. The protein localises to the chloroplast. Its function is as follows. One of the primary rRNA binding proteins, it binds directly to 16S rRNA where it nucleates assembly of the head domain of the 30S subunit. The sequence is that of Small ribosomal subunit protein uS7c (rps7) from Pinus koraiensis (Korean pine).